We begin with the raw amino-acid sequence, 355 residues long: Daphnetin O-methyltransferase 1 (355 aa).

Positions 222, 242, and 256 each coordinate S-adenosyl-L-homocysteine. Catalysis depends on H260, which acts as the Proton acceptor.

The protein belongs to the class I-like SAM-binding methyltransferase superfamily. Cation-independent O-methyltransferase family. COMT subfamily.

The catalysed reaction is 7,8-dihydroxycoumarin + S-adenosyl-L-methionine = 7-hydroxy-8-methoxycoumarin + S-adenosyl-L-homocysteine + H(+). It functions in the pathway aromatic compound metabolism. The protein operates within secondary metabolite biosynthesis. O-methyltransferase involved in the biosynthesis of coumarins natural products such as daphnetin derivatives. Catalyzes specifically the methylation of daphnetin (7,8-dihydroxycoumarin) to produce hydrangetin (7-hydroxy-8-methoxycoumarin). Probably involved in acclimation to low temperature conditions. The sequence is that of Daphnetin O-methyltransferase 1 from Secale cereale (Rye).